The chain runs to 156 residues: Ribosome maturation factor RimP (156 aa).

This sequence belongs to the RimP family.

Its subcellular location is the cytoplasm. In terms of biological role, required for maturation of 30S ribosomal subunits. The sequence is that of Ribosome maturation factor RimP from Treponema pallidum (strain Nichols).